A 163-amino-acid chain; its full sequence is Putative 4-hydroxy-4-methyl-2-oxoglutarate aldolase (163 aa).

Substrate is bound by residues 76–79 and arginine 98; that span reads GDMI. Residue aspartate 99 participates in a divalent metal cation binding.

It belongs to the class II aldolase/RraA-like family. In terms of assembly, homotrimer. A divalent metal cation serves as cofactor.

It carries out the reaction 4-hydroxy-4-methyl-2-oxoglutarate = 2 pyruvate. The enzyme catalyses oxaloacetate + H(+) = pyruvate + CO2. Catalyzes the aldol cleavage of 4-hydroxy-4-methyl-2-oxoglutarate (HMG) into 2 molecules of pyruvate. Also contains a secondary oxaloacetate (OAA) decarboxylase activity due to the common pyruvate enolate transition state formed following C-C bond cleavage in the retro-aldol and decarboxylation reactions. In Pseudomonas fluorescens, this protein is Putative 4-hydroxy-4-methyl-2-oxoglutarate aldolase.